Here is a 292-residue protein sequence, read N- to C-terminus: 4-hydroxy-tetrahydrodipicolinate synthase (292 aa).

Thr45 provides a ligand contact to pyruvate. The Proton donor/acceptor role is filled by Tyr133. Lys161 (schiff-base intermediate with substrate) is an active-site residue. Ile203 is a binding site for pyruvate.

Belongs to the DapA family. In terms of assembly, homotetramer; dimer of dimers.

The protein localises to the cytoplasm. The enzyme catalyses L-aspartate 4-semialdehyde + pyruvate = (2S,4S)-4-hydroxy-2,3,4,5-tetrahydrodipicolinate + H2O + H(+). Its pathway is amino-acid biosynthesis; L-lysine biosynthesis via DAP pathway; (S)-tetrahydrodipicolinate from L-aspartate: step 3/4. Its function is as follows. Catalyzes the condensation of (S)-aspartate-beta-semialdehyde [(S)-ASA] and pyruvate to 4-hydroxy-tetrahydrodipicolinate (HTPA). The chain is 4-hydroxy-tetrahydrodipicolinate synthase from Erwinia tasmaniensis (strain DSM 17950 / CFBP 7177 / CIP 109463 / NCPPB 4357 / Et1/99).